The primary structure comprises 368 residues: Glutaminyl-peptide cyclotransferase (368 aa).

An N-terminal signal peptide occupies residues 1-23; sequence MARERRDSKAATFFCLAWALCLA. Asn-53 and Asn-65 each carry an N-linked (GlcNAc...) asparagine glycan. Cys-143 and Cys-169 are disulfide-bonded. Position 164 (Asp-164) interacts with Zn(2+). Glu-207 acts as the Proton acceptor in catalysis. Glu-208 is a Zn(2+) binding site. Asp-254 (proton acceptor) is an active-site residue. N-linked (GlcNAc...) asparagine glycosylation is present at Asn-292. Residue His-336 coordinates Zn(2+). Asn-352 is a glycosylation site (N-linked (GlcNAc...) asparagine).

It belongs to the glutaminyl-peptide cyclotransferase family. Expressed by the venom gland.

It localises to the secreted. It catalyses the reaction N-terminal L-glutaminyl-[peptide] = N-terminal 5-oxo-L-prolyl-[peptide] + NH4(+). Its function is as follows. Responsible for the biosynthesis of pyroglutamyl peptides. Has a bias against acidic and tryptophan residues adjacent to the N-terminal glutaminyl residue and a lack of importance of chain length after the second residue. Also catalyzes N-terminal pyroglutamate formation. The polypeptide is Glutaminyl-peptide cyclotransferase (QPCT) (Bothrops jararaca (Jararaca)).